The chain runs to 319 residues: Methionyl-tRNA formyltransferase (319 aa).

116–119 provides a ligand contact to (6S)-5,6,7,8-tetrahydrofolate; sequence SLLP.

Belongs to the Fmt family.

The enzyme catalyses L-methionyl-tRNA(fMet) + (6R)-10-formyltetrahydrofolate = N-formyl-L-methionyl-tRNA(fMet) + (6S)-5,6,7,8-tetrahydrofolate + H(+). In terms of biological role, attaches a formyl group to the free amino group of methionyl-tRNA(fMet). The formyl group appears to play a dual role in the initiator identity of N-formylmethionyl-tRNA by promoting its recognition by IF2 and preventing the misappropriation of this tRNA by the elongation apparatus. This Wigglesworthia glossinidia brevipalpis protein is Methionyl-tRNA formyltransferase.